Here is a 418-residue protein sequence, read N- to C-terminus: MTNGNLLYAQSGGVTAVINATAAGVIGEARARKIKVLAARNGILGALREELIDTSKESAAAIAALAQTPGGAFGSCRYKLKSLEQDRAKYERLLEVLRAHDVRWFLYNGGNDSADTALKVSQLAKAFGYPLHCIGVPKTIDNDLAVTDTCPGFGSAAKYTAVSVREAALDVAAMADTSTKVFIYEAMGRHAGWLAAAAGLAGQGPDDAPQIILLPERAFDQAAFLAKVRQMVERVGWCVVVASEGIQDAQGKFVADAGGATDSFGHAQLGGVASFLAAQVKQELGYKVHWTLPDYLQRSARHLASKTDWEQAQAVGKAAVQYALKGMNAVIPVIERVSDAPYRWKIVPAPLHKVANHEKKMPPSFLRKDGFGITERARRYFAPLIKGEAPLAYGSDGLPKYVSLKNVAVAKKLPAWEG.

G13 serves as a coordination point for diphosphate. N111 serves as a coordination point for Mg(2+). Substrate-binding positions include 139 to 141, 187 to 189, E244, and 295 to 298; these read TID, MGR, and YLQR. D141 serves as the catalytic Proton acceptor.

Belongs to the phosphofructokinase type A (PFKA) family. PPi-dependent PFK group II subfamily. Clade 'B2' sub-subfamily. As to quaternary structure, homodimer. Mg(2+) is required as a cofactor.

It is found in the cytoplasm. It carries out the reaction beta-D-fructose 6-phosphate + diphosphate = beta-D-fructose 1,6-bisphosphate + phosphate + H(+). The protein operates within carbohydrate degradation; glycolysis; D-glyceraldehyde 3-phosphate and glycerone phosphate from D-glucose: step 3/4. With respect to regulation, non-allosteric. Its function is as follows. Catalyzes the phosphorylation of D-fructose 6-phosphate, the first committing step of glycolysis. Uses inorganic phosphate (PPi) as phosphoryl donor instead of ATP like common ATP-dependent phosphofructokinases (ATP-PFKs), which renders the reaction reversible, and can thus function both in glycolysis and gluconeogenesis. Consistently, PPi-PFK can replace the enzymes of both the forward (ATP-PFK) and reverse (fructose-bisphosphatase (FBPase)) reactions. In Xanthomonas campestris pv. campestris (strain B100), this protein is Pyrophosphate--fructose 6-phosphate 1-phosphotransferase.